Reading from the N-terminus, the 227-residue chain is Large ribosomal subunit protein uL3 (227 aa).

The segment at 146–167 is disordered; the sequence is RGPMAHGSKFHRHQGSNGACSS.

The protein belongs to the universal ribosomal protein uL3 family. As to quaternary structure, part of the 50S ribosomal subunit. Forms a cluster with proteins L14 and L19.

In terms of biological role, one of the primary rRNA binding proteins, it binds directly near the 3'-end of the 23S rRNA, where it nucleates assembly of the 50S subunit. The protein is Large ribosomal subunit protein uL3 of Agathobacter rectalis (strain ATCC 33656 / DSM 3377 / JCM 17463 / KCTC 5835 / VPI 0990) (Eubacterium rectale).